We begin with the raw amino-acid sequence, 340 residues long: Phosphoribosylformylglycinamidine cyclo-ligase (340 aa).

It belongs to the AIR synthase family.

The protein localises to the cytoplasm. It carries out the reaction 2-formamido-N(1)-(5-O-phospho-beta-D-ribosyl)acetamidine + ATP = 5-amino-1-(5-phospho-beta-D-ribosyl)imidazole + ADP + phosphate + H(+). Its pathway is purine metabolism; IMP biosynthesis via de novo pathway; 5-amino-1-(5-phospho-D-ribosyl)imidazole from N(2)-formyl-N(1)-(5-phospho-D-ribosyl)glycinamide: step 2/2. This chain is Phosphoribosylformylglycinamidine cyclo-ligase, found in Acetivibrio thermocellus (strain ATCC 27405 / DSM 1237 / JCM 9322 / NBRC 103400 / NCIMB 10682 / NRRL B-4536 / VPI 7372) (Clostridium thermocellum).